Reading from the N-terminus, the 314-residue chain is Protoheme IX farnesyltransferase (314 aa).

7 consecutive transmembrane segments (helical) span residues leucine 58 to phenylalanine 78, alanine 107 to valine 127, leucine 130 to leucine 150, tryptophan 173 to phenylalanine 193, valine 227 to proline 247, valine 248 to leucine 268, and serine 294 to glycine 314.

It belongs to the UbiA prenyltransferase family. Protoheme IX farnesyltransferase subfamily.

Its subcellular location is the cell membrane. It carries out the reaction heme b + (2E,6E)-farnesyl diphosphate + H2O = Fe(II)-heme o + diphosphate. It participates in porphyrin-containing compound metabolism; heme O biosynthesis; heme O from protoheme: step 1/1. Converts heme B (protoheme IX) to heme O by substitution of the vinyl group on carbon 2 of heme B porphyrin ring with a hydroxyethyl farnesyl side group. The protein is Protoheme IX farnesyltransferase of Nocardioides sp. (strain ATCC BAA-499 / JS614).